The chain runs to 172 residues: GTP-dependent dephospho-CoA kinase (172 aa).

Residues aspartate 49, valine 50, valine 51, aspartate 68, lysine 70, and glutamate 120 each coordinate GTP.

It belongs to the GTP-dependent DPCK family.

It catalyses the reaction 3'-dephospho-CoA + GTP = GDP + CoA + H(+). The protein operates within cofactor biosynthesis; coenzyme A biosynthesis. Its function is as follows. Catalyzes the GTP-dependent phosphorylation of the 3'-hydroxyl group of dephosphocoenzyme A to form coenzyme A (CoA). This Pyrobaculum arsenaticum (strain DSM 13514 / JCM 11321 / PZ6) protein is GTP-dependent dephospho-CoA kinase.